Consider the following 462-residue polypeptide: Cytochrome P450 20A1 (462 aa).

A helical transmembrane segment spans residues 4-24 (FAIFAVTFLLALVGAVLYLYP). Position 409 (Cys-409) interacts with heme.

Belongs to the cytochrome P450 family. It depends on heme as a cofactor.

The protein localises to the membrane. The chain is Cytochrome P450 20A1 (Cyp20a1) from Mus musculus (Mouse).